Consider the following 365-residue polypeptide: Serine/threonine-protein phosphatase 2A activator 1 (365 aa).

The segment at Y321 to T349 is disordered. Positions P331 to T342 are enriched in low complexity.

It belongs to the PTPA-type PPIase family.

The protein localises to the cytoplasm. The protein resides in the nucleus. The catalysed reaction is [protein]-peptidylproline (omega=180) = [protein]-peptidylproline (omega=0). In terms of biological role, PPIases accelerate the folding of proteins. It catalyzes the cis-trans isomerization of proline imidic peptide bonds in oligopeptides. Acts as a regulatory subunit for PP2A-like phosphatases modulating their activity or substrate specificity, probably by inducing a conformational change in the catalytic subunit, a direct target of the PPIase. Can reactivate inactive phosphatase PP2A-phosphatase methylesterase complexes (PP2Ai) in presence of ATP and Mg(2+) by dissociating the inactive form from the complex. This is Serine/threonine-protein phosphatase 2A activator 1 (RRD1) from Eremothecium gossypii (strain ATCC 10895 / CBS 109.51 / FGSC 9923 / NRRL Y-1056) (Yeast).